We begin with the raw amino-acid sequence, 655 residues long: p-hydroxybenzoic acid efflux pump subunit AaeB (655 aa).

A run of 10 helical transmembrane segments spans residues Phe13–Leu33, Trp38–Pro58, Leu69–Ile89, Leu93–Val113, Trp121–Leu141, Glu152–Ile172, Leu370–Val390, Phe407–Pro427, Gln431–Val451, and Phe482–Leu502.

It belongs to the aromatic acid exporter ArAE (TC 2.A.85) family.

Its subcellular location is the cell inner membrane. Its function is as follows. Forms an efflux pump with AaeA. Could function as a metabolic relief valve, allowing to eliminate certain compounds when they accumulate to high levels in the cell. The polypeptide is p-hydroxybenzoic acid efflux pump subunit AaeB (Shigella dysenteriae serotype 1 (strain Sd197)).